Consider the following 129-residue polypeptide: Protachykinin-1 (129 aa).

Positions 1 to 19 (MKILVALAVFFLVSTQLFA) are cleaved as a signal peptide. A propeptide spanning residues 20-56 (EEIGANDDLNYWSDWYDSDQIKEELPEPFEHLLQRIA) is cleaved from the precursor. 2 positions are modified to methionine amide: M68 and M107.

Belongs to the tachykinin family. The substance P form is cleaved at Pro-59 by the prolyl endopeptidase FAP (seprase) activity (in vitro). Substance P is also cleaved and degraded by Angiotensin-converting enzyme (ACE) and neprilysin (MME).

The protein resides in the secreted. Functionally, tachykinins are active peptides which excite neurons, evoke behavioral responses, are potent vasodilators and secretagogues, and contract (directly or indirectly) many smooth muscles. The polypeptide is Protachykinin-1 (TAC1) (Homo sapiens (Human)).